The chain runs to 221 residues: Protein myomaker (221 aa).

Topologically, residues 1 to 3 (MGT) are extracellular. Residues 4–24 (VVAKLLLPTLSSLAFLPTVSI) traverse the membrane as a helical segment. The Cytoplasmic segment spans residues 25–29 (ATKRR). A helical transmembrane segment spans residues 30–50 (FYMEAMVYLFTMFFVAFSHAC). Residues 51-64 (DGPGLSVLCFMRRD) are Extracellular-facing. The chain crosses the membrane as a helical span at residues 65–85 (ILEYFSIYGTALSMWVSLMAL). Residues 86–93 (ADFDEPQR) are Cytoplasmic-facing. The chain crosses the membrane as a helical span at residues 94–110 (STFTMLGVLTIAVRTFH). At 111–113 (DRW) the chain is on the extracellular side. Residues 114–134 (GYGVYSGPIGTATLIIAVKWL) form a helical membrane-spanning segment. At 135–153 (KKMKEKKGLYPDKSIYTQQ) the chain is on the cytoplasmic side. Residues 154-174 (IGPGLCFGALALMLRFFFEEW) traverse the membrane as a helical segment. D175 is a topological domain (extracellular). A helical membrane pass occupies residues 176–196 (YTYVHSFYHCALAMSFVLLLP). Residues 197 to 221 (KVNKKAGNAGAPAKLTFSTLCCTCV) lie on the Cytoplasmic side of the membrane. S-palmitoyl cysteine attachment occurs at residues C217 and C218.

The protein belongs to the TMEM8 family. In terms of assembly, interacts with MYMX. Palmitoylated at the C-terminus; palmitoylation promotes localization to the Golgi apparatus. Specifically expressed in skeletal muscle during embryogenesis and adult muscle regeneration.

It localises to the cell membrane. The protein resides in the golgi apparatus membrane. Myoblast-specific protein that mediates myoblast fusion, an essential step for the formation of multi-nucleated muscle fibers. Actively participates in the membrane fusion reaction by mediating the mixing of cell membrane lipids (hemifusion) upstream of MYMX. Acts independently of MYMX. Involved in skeletal muscle regeneration in response to injury by mediating the fusion of satellite cells, a population of muscle stem cells, with injured myofibers. Also involved in skeletal muscle hypertrophy, probably by mediating the fusion of satellite cells with myofibers. In Mus musculus (Mouse), this protein is Protein myomaker.